Consider the following 150-residue polypeptide: FCS-Like Zinc finger 15 (150 aa).

The segment covering 12–28 (NNNNNNNNNNNNNNNKN) has biased composition (low complexity). A disordered region spans residues 12–31 (NNNNNNNNNNNNNNNKNPLS). The FLZ-type zinc-finger motif lies at 67 to 111 (GFLEHCFLCRRKLLPAKDIYMYKGDRAFCSVECRSKQMIMDEEES). Residues 129 to 150 (SPATAPSRYRRDPRNQAGGFAY) form a disordered region.

Belongs to the FLZ family. Interacts with KIN10 and KIN11 via its FLZ-type zinc finger domain. Interacts with KINB1 and KINB3 via its N-terminal part. Forms homodimer and heterodimer with FLZ1, FLZ2 and FLZ7 in vitro.

The protein resides in the cytoplasm. It localises to the P-body. May act as an adapter to facilitate the interaction of SnRK1 complex with effector proteins, conferring tissue- and stimulus-type specific differences in the SnRK1 regulation pathway. The sequence is that of FCS-Like Zinc finger 15 from Arabidopsis thaliana (Mouse-ear cress).